We begin with the raw amino-acid sequence, 545 residues long: MAAKEVVFGNDARVKMLAGVNILANAVKVTLGPKGRNVVLDKSFGSPLITKDGVSVAKEIELEDKFENMGAQMVKEVASKANDAAGDGTTTATVLAQAIVTEGLKAVAAGMNPMDLKRGIDKAVAAAVIELKNLSQDCADSKAIAQVGTISANSDESIGQIIATAMEKVGKEGVITVEEGQALENELDVVEGMQFDRGYLSPYFINKPETGSVELDHPFVLLVDKKISNIRELLPILEGLAKTGKPLLIVAEDVEGEALATLVVNNMRGIVKVAAVKAPGFGDRRKAMLQDVAILTGGTVIAEEIGLELEKATLEDLGTAKRVVITKDNTTIIDGNGEQAQIEARVSQIKQQIEESTSDYDKEKLQERMAKLAGGVAVIKVGAATEVEMKEKKARVEDALHATRAAVEEGVVPGGGVALVRVASKIADVEVANEDQKHGVVIALRAMEAPLRQIATNAGEEASVVANTVKNGSGNYGYNAGNDTYGDMLEMGILDPTKVTRSALQFAASIAGLMITTEAMVAELPKADAPDMGGMGGMGGMGGMM.

Residues 30 to 33 (TLGP), K51, 87 to 91 (DGTTT), G415, and D495 each bind ATP.

This sequence belongs to the chaperonin (HSP60) family. In terms of assembly, forms a cylinder of 14 subunits composed of two heptameric rings stacked back-to-back. Interacts with the co-chaperonin GroES.

The protein localises to the cytoplasm. It catalyses the reaction ATP + H2O + a folded polypeptide = ADP + phosphate + an unfolded polypeptide.. Its function is as follows. Together with its co-chaperonin GroES, plays an essential role in assisting protein folding. The GroEL-GroES system forms a nano-cage that allows encapsulation of the non-native substrate proteins and provides a physical environment optimized to promote and accelerate protein folding. This chain is Chaperonin GroEL, found in Shewanella sp. (strain ANA-3).